A 250-amino-acid polypeptide reads, in one-letter code: Dihydroorotate dehydrogenase B (NAD(+)), electron transfer subunit (250 aa).

Positions 1 to 94 (MKVVAQEEIA…MGPQGNGFDL (94 aa)) constitute an FAD-binding FR-type domain. FAD contacts are provided by residues 45-48 (RPIS), 62-64 (IYR), and 69-70 (GT). [2Fe-2S] cluster is bound by residues cysteine 214, cysteine 219, cysteine 222, and cysteine 237.

The protein belongs to the PyrK family. Heterotetramer of 2 PyrK and 2 PyrD type B subunits. [2Fe-2S] cluster is required as a cofactor. The cofactor is FAD.

Its pathway is pyrimidine metabolism; UMP biosynthesis via de novo pathway; orotate from (S)-dihydroorotate (NAD(+) route): step 1/1. Its function is as follows. Responsible for channeling the electrons from the oxidation of dihydroorotate from the FMN redox center in the PyrD type B subunit to the ultimate electron acceptor NAD(+). The chain is Dihydroorotate dehydrogenase B (NAD(+)), electron transfer subunit from Streptococcus pneumoniae serotype 4 (strain ATCC BAA-334 / TIGR4).